Reading from the N-terminus, the 420-residue chain is Phosphoribosylamine--glycine ligase (420 aa).

The region spanning 108-314 (KQIMVKYGIP…FAQNIDDILH (207 aa)) is the ATP-grasp domain. ATP is bound at residue 134-195 (IEEQGAPIVV…EEFLAGEEFS (62 aa)). Positions 284 and 286 each coordinate Mg(2+).

This sequence belongs to the GARS family. The cofactor is Mg(2+). It depends on Mn(2+) as a cofactor.

The catalysed reaction is 5-phospho-beta-D-ribosylamine + glycine + ATP = N(1)-(5-phospho-beta-D-ribosyl)glycinamide + ADP + phosphate + H(+). It functions in the pathway purine metabolism; IMP biosynthesis via de novo pathway; N(1)-(5-phospho-D-ribosyl)glycinamide from 5-phospho-alpha-D-ribose 1-diphosphate: step 2/2. The protein is Phosphoribosylamine--glycine ligase of Streptococcus suis.